Consider the following 398-residue polypeptide: Carbamoyl phosphate synthase small chain (398 aa).

CPSase regions lie at residues 1-205 (MTQT…TNDA) and 1-207 (MTQT…DACN). L-glutamine is bound by residues Ser-60, Gly-257, and Gly-259. The Glutamine amidotransferase type-1 domain maps to 209 to 397 (HIVAIDYGIK…FNLIMDYKRT (189 aa)). Cys-286 functions as the Nucleophile in the catalytic mechanism. Residues Leu-287, Gln-290, Asn-328, Gly-330, and Phe-331 each contribute to the L-glutamine site. Active-site residues include His-370 and Glu-372.

It belongs to the CarA family. As to quaternary structure, composed of two chains; the small (or glutamine) chain promotes the hydrolysis of glutamine to ammonia, which is used by the large (or ammonia) chain to synthesize carbamoyl phosphate. Tetramer of heterodimers (alpha,beta)4.

The catalysed reaction is hydrogencarbonate + L-glutamine + 2 ATP + H2O = carbamoyl phosphate + L-glutamate + 2 ADP + phosphate + 2 H(+). It catalyses the reaction L-glutamine + H2O = L-glutamate + NH4(+). It participates in amino-acid biosynthesis; L-arginine biosynthesis; carbamoyl phosphate from bicarbonate: step 1/1. It functions in the pathway pyrimidine metabolism; UMP biosynthesis via de novo pathway; (S)-dihydroorotate from bicarbonate: step 1/3. In terms of biological role, small subunit of the glutamine-dependent carbamoyl phosphate synthetase (CPSase). CPSase catalyzes the formation of carbamoyl phosphate from the ammonia moiety of glutamine, carbonate, and phosphate donated by ATP, constituting the first step of 2 biosynthetic pathways, one leading to arginine and/or urea and the other to pyrimidine nucleotides. The small subunit (glutamine amidotransferase) binds and cleaves glutamine to supply the large subunit with the substrate ammonia. This chain is Carbamoyl phosphate synthase small chain, found in Bartonella quintana (strain Toulouse) (Rochalimaea quintana).